Consider the following 1476-residue polypeptide: SH3 and multiple ankyrin repeat domains protein 2 (1476 aa).

Over residues Leu-66–Ser-76 the composition is skewed to polar residues. Positions Leu-66–Phe-134 are disordered. Positions Val-147–Cys-206 constitute an SH3 domain. A Phosphoserine modification is found at Val-162. In terms of domain architecture, PDZ spans Thr-247 to Thr-341. Ser-372 is subject to Phosphoserine. The interval Arg-391 to Asn-412 is disordered. Ser-456 is subject to Phosphoserine. Thr-485 carries the phosphothreonine modification. Positions Leu-503 to Cys-533 are disordered. Residues Ile-512–Pro-528 show a composition bias toward pro residues. Ser-586 is subject to Phosphoserine. Disordered regions lie at residues Thr-659–Arg-916, Val-946–Ala-983, and Pro-1057–Asp-1153. Residues Ser-666–Ser-678 are compositionally biased toward low complexity. A compositionally biased stretch (basic and acidic residues) spans Val-711–Arg-722. Phosphoserine is present on Ser-724. The segment covering Leu-783 to Gly-795 has biased composition (gly residues). The span at Arg-833 to Ser-846 shows a compositional bias: low complexity. 2 stretches are compositionally biased toward basic and acidic residues: residues Ala-847 to Leu-868 and Arg-899 to Arg-916. Position 903 is a phosphothreonine (Thr-903). The segment covering Thr-1070–Thr-1085 has biased composition (polar residues). Residues Val-1119–Glu-1130 show a composition bias toward basic and acidic residues. Positions Thr-1131–Ser-1151 are enriched in low complexity. The SH3-binding signature appears at Pro-1169–Pro-1175. Disordered stretches follow at residues Glu-1195–Ala-1216 and Asn-1260–Lys-1403. The span at Ile-1202–Gly-1212 shows a compositional bias: pro residues. Residues Ser-1291–Val-1305 are compositionally biased toward low complexity. Thr-1292 carries an O-linked (GlcNAc) threonine glycan. Polar residues predominate over residues Pro-1307–Ser-1317. 2 positions are modified to phosphoserine: Ser-1334 and Ser-1338. Residues Leu-1364–Pro-1375 are compositionally biased toward polar residues. The segment covering Arg-1387–Ser-1401 has biased composition (low complexity). The region spanning Trp-1413–Arg-1476 is the SAM domain.

This sequence belongs to the SHANK family. Is part of a complex with DLG4/PSD-95 and DLGAP1/GKAP. Interacts with CTTN/cortactin SH3 domain, DLGAP1/GKAP and alpha-latrotoxin receptor 1. Interacts with DNM2, DBNL, GRID2, BAIAP2, SLC9A3, PLCB3 and CFTR. Interacts (via proline-rich region) with PDE4D. Interacts with ABI1 (via SH3 domain). Detected in brain (at protein level), where it is highly expressed in Purkinje cells.

The protein resides in the apical cell membrane. It is found in the cytoplasm. Its subcellular location is the synapse. It localises to the postsynaptic density. The protein localises to the cell projection. The protein resides in the dendritic spine. It is found in the growth cone. Seems to be an adapter protein in the postsynaptic density (PSD) of excitatory synapses that interconnects receptors of the postsynaptic membrane including NMDA-type and metabotropic glutamate receptors, and the actin-based cytoskeleton. May play a role in the structural and functional organization of the dendritic spine and synaptic junction. This is SH3 and multiple ankyrin repeat domains protein 2 (Shank2) from Mus musculus (Mouse).